A 353-amino-acid polypeptide reads, in one-letter code: Methionine import ATP-binding protein MetN (353 aa).

Residues 7–249 (LENIDVTFKQ…PKEELSRQFV (243 aa)) enclose the ABC transporter domain. 41 to 48 (GYSGAGKS) is a binding site for ATP.

The protein belongs to the ABC transporter superfamily. Methionine importer (TC 3.A.1.24) family. In terms of assembly, the complex is composed of two ATP-binding proteins (MetN), two transmembrane proteins (MetI) and a solute-binding protein (MetQ).

It is found in the cell membrane. It carries out the reaction L-methionine(out) + ATP + H2O = L-methionine(in) + ADP + phosphate + H(+). The enzyme catalyses D-methionine(out) + ATP + H2O = D-methionine(in) + ADP + phosphate + H(+). Its function is as follows. Part of the ABC transporter complex MetNIQ involved in methionine import. Responsible for energy coupling to the transport system. The chain is Methionine import ATP-binding protein MetN from Ligilactobacillus salivarius (strain UCC118) (Lactobacillus salivarius).